The sequence spans 616 residues: Dihydroxy-acid dehydratase (616 aa).

Position 81 (aspartate 81) interacts with Mg(2+). Residue cysteine 122 coordinates [2Fe-2S] cluster. Residues aspartate 123 and lysine 124 each coordinate Mg(2+). Lysine 124 carries the N6-carboxylysine modification. A [2Fe-2S] cluster-binding site is contributed by cysteine 195. Mg(2+) is bound at residue glutamate 491. Serine 517 (proton acceptor) is an active-site residue.

The protein belongs to the IlvD/Edd family. Homodimer. Requires [2Fe-2S] cluster as cofactor. The cofactor is Mg(2+).

It carries out the reaction (2R)-2,3-dihydroxy-3-methylbutanoate = 3-methyl-2-oxobutanoate + H2O. The enzyme catalyses (2R,3R)-2,3-dihydroxy-3-methylpentanoate = (S)-3-methyl-2-oxopentanoate + H2O. The protein operates within amino-acid biosynthesis; L-isoleucine biosynthesis; L-isoleucine from 2-oxobutanoate: step 3/4. Its pathway is amino-acid biosynthesis; L-valine biosynthesis; L-valine from pyruvate: step 3/4. In terms of biological role, functions in the biosynthesis of branched-chain amino acids. Catalyzes the dehydration of (2R,3R)-2,3-dihydroxy-3-methylpentanoate (2,3-dihydroxy-3-methylvalerate) into 2-oxo-3-methylpentanoate (2-oxo-3-methylvalerate) and of (2R)-2,3-dihydroxy-3-methylbutanoate (2,3-dihydroxyisovalerate) into 2-oxo-3-methylbutanoate (2-oxoisovalerate), the penultimate precursor to L-isoleucine and L-valine, respectively. The protein is Dihydroxy-acid dehydratase of Shewanella woodyi (strain ATCC 51908 / MS32).